A 442-amino-acid chain; its full sequence is UDP-N-acetylmuramoylalanine--D-glutamate ligase (442 aa).

113-119 lines the ATP pocket; the sequence is GSNGKTT.

This sequence belongs to the MurCDEF family.

Its subcellular location is the cytoplasm. It carries out the reaction UDP-N-acetyl-alpha-D-muramoyl-L-alanine + D-glutamate + ATP = UDP-N-acetyl-alpha-D-muramoyl-L-alanyl-D-glutamate + ADP + phosphate + H(+). Its pathway is cell wall biogenesis; peptidoglycan biosynthesis. In terms of biological role, cell wall formation. Catalyzes the addition of glutamate to the nucleotide precursor UDP-N-acetylmuramoyl-L-alanine (UMA). The polypeptide is UDP-N-acetylmuramoylalanine--D-glutamate ligase (Coxiella burnetii (strain Dugway 5J108-111)).